Reading from the N-terminus, the 662-residue chain is Acetyl-coenzyme A synthetase (662 aa).

Residues 197 to 200 (RKGK) and threonine 317 each bind CoA. ATP contacts are provided by residues 393 to 395 (GEP), 417 to 422 (DTWWQT), aspartate 510, and arginine 525. Serine 533 lines the CoA pocket. Arginine 536 contributes to the ATP binding site. Mg(2+)-binding residues include histidine 549 and valine 552. Lysine 623 is subject to N6-acetyllysine.

This sequence belongs to the ATP-dependent AMP-binding enzyme family. Requires Mg(2+) as cofactor. Post-translationally, acetylated. Deacetylation by the SIR2-homolog deacetylase activates the enzyme.

It catalyses the reaction acetate + ATP + CoA = acetyl-CoA + AMP + diphosphate. Its function is as follows. Catalyzes the conversion of acetate into acetyl-CoA (AcCoA), an essential intermediate at the junction of anabolic and catabolic pathways. AcsA undergoes a two-step reaction. In the first half reaction, AcsA combines acetate with ATP to form acetyl-adenylate (AcAMP) intermediate. In the second half reaction, it can then transfer the acetyl group from AcAMP to the sulfhydryl group of CoA, forming the product AcCoA. This is Acetyl-coenzyme A synthetase from Helicobacter pylori (strain HPAG1).